A 434-amino-acid chain; its full sequence is Serine/threonine-protein kinase Sgk1-A (434 aa).

A disordered region spans residues 66–94; it reads PQEPELLNENSSPPPSPSQQINLGPSSNP. The segment covering 84–94 has biased composition (polar residues); the sequence is QQINLGPSSNP. The region spanning 101–358 is the Protein kinase domain; it reads FQFLKIIGKG…FMEIKNHIFF (258 aa). ATP-binding positions include 107 to 115 and lysine 130; that span reads IGKGSFGKV. Aspartate 225 acts as the Proton acceptor in catalysis. Residues 359-434 enclose the AGC-kinase C-terminal domain; the sequence is SPINWDDLIN…SYAPPMESYL (76 aa).

It belongs to the protein kinase superfamily. AGC Ser/Thr protein kinase family.

It localises to the cytoplasm. The protein resides in the nucleus. It is found in the endoplasmic reticulum. It carries out the reaction L-seryl-[protein] + ATP = O-phospho-L-seryl-[protein] + ADP + H(+). It catalyses the reaction L-threonyl-[protein] + ATP = O-phospho-L-threonyl-[protein] + ADP + H(+). Protein kinase that may play an important role in cellular stress response. Plays an important role in activating certain potassium, sodium, and chloride channels, suggesting an involvement in the regulation of processes such as cell survival, neuronal excitability, and renal sodium excretion. The protein is Serine/threonine-protein kinase Sgk1-A (sgk1-a) of Xenopus laevis (African clawed frog).